The sequence spans 100 residues: Urease subunit gamma (100 aa).

Belongs to the urease gamma subunit family. Heterotrimer of UreA (gamma), UreB (beta) and UreC (alpha) subunits. Three heterotrimers associate to form the active enzyme.

It is found in the cytoplasm. It catalyses the reaction urea + 2 H2O + H(+) = hydrogencarbonate + 2 NH4(+). It participates in nitrogen metabolism; urea degradation; CO(2) and NH(3) from urea (urease route): step 1/1. This chain is Urease subunit gamma, found in Synechococcus sp. (strain CC9902).